The sequence spans 229 residues: DNA repair protein RecO (229 aa).

It belongs to the RecO family.

Involved in DNA repair and RecF pathway recombination. The sequence is that of DNA repair protein RecO from Legionella pneumophila subsp. pneumophila (strain Philadelphia 1 / ATCC 33152 / DSM 7513).